A 275-amino-acid polypeptide reads, in one-letter code: 3-methyl-2-oxobutanoate hydroxymethyltransferase (275 aa).

Residues D44 and D83 each contribute to the Mg(2+) site. 3-methyl-2-oxobutanoate is bound by residues 44 to 45 (DS), D83, and K113. Residue E115 participates in Mg(2+) binding. The Proton acceptor role is filled by E182.

Belongs to the PanB family. As to quaternary structure, homodecamer; pentamer of dimers. The cofactor is Mg(2+).

It is found in the cytoplasm. The enzyme catalyses 3-methyl-2-oxobutanoate + (6R)-5,10-methylene-5,6,7,8-tetrahydrofolate + H2O = 2-dehydropantoate + (6S)-5,6,7,8-tetrahydrofolate. The protein operates within cofactor biosynthesis; (R)-pantothenate biosynthesis; (R)-pantoate from 3-methyl-2-oxobutanoate: step 1/2. Catalyzes the reversible reaction in which hydroxymethyl group from 5,10-methylenetetrahydrofolate is transferred onto alpha-ketoisovalerate to form ketopantoate. This chain is 3-methyl-2-oxobutanoate hydroxymethyltransferase, found in Clostridium botulinum (strain Alaska E43 / Type E3).